We begin with the raw amino-acid sequence, 183 residues long: Phosphopantetheine adenylyltransferase (183 aa).

T13 serves as a coordination point for substrate. Residues 13–14 (TF) and H21 each bind ATP. 3 residues coordinate substrate: K45, L81, and R95. Residues 96–98 (GLR), E106, and 131–137 (HQFISSR) contribute to the ATP site.

This sequence belongs to the bacterial CoaD family. Homohexamer. The cofactor is Mg(2+).

The protein localises to the cytoplasm. It carries out the reaction (R)-4'-phosphopantetheine + ATP + H(+) = 3'-dephospho-CoA + diphosphate. Its pathway is cofactor biosynthesis; coenzyme A biosynthesis; CoA from (R)-pantothenate: step 4/5. Its function is as follows. Reversibly transfers an adenylyl group from ATP to 4'-phosphopantetheine, yielding dephospho-CoA (dPCoA) and pyrophosphate. This is Phosphopantetheine adenylyltransferase from Rhodospirillum centenum (strain ATCC 51521 / SW).